Consider the following 440-residue polypeptide: Aclacinomycin-T 2-deoxy-L-fucose transferase (440 aa).

The enzyme catalyses dTDP-2-deoxy-beta-L-fucose + aclacinomycin T = aclacinomycin S + dTDP + H(+). Its function is as follows. Involved in the biosynthesis of the trisaccharide moiety characteristic of the antitumor drug aclacinomycins. In the first reaction, AknK catalyzes the transfer of 2-deoxy-beta-L-fucose from the activated donor dTDP-2-deoxy-beta-L-fucose to the mono-glycosylated aclacinomycin T (rhodosaminyl aklavinone), forming the di-glycosylated aclacinomycin S (L-2-deoxyfucosyl-L-rhodosaminyl aklavinone). It can also catalyze the addition of an alternate dTDP-L-sugar, dTDP-L-daunosamine, to aclacinomycin T and the addition of 2-deoxy-beta-L-fucose to the mono-glycosylated aglycones (monoglycosylated anthracyclines) such as daunomycin (daunorubicin), adriamycin (doxorubicin) and idarubicin. In vitro, AknK also catalyzes the addition of a second L-2-deoxyfucosyl moiety from dTDP-2-deoxy-beta-L-fucose, albeit with reduced activity, to the natural disaccharide chain of aclacinomycin S to produce L-deoxyfucosyl-L-deoxyfucosyl-L-rhodosaminyl aklavinone (2-deoxy-alpha-D-fucosyl-aclacinomycin S), a variant of the natural aclacinomycin A. The chain is Aclacinomycin-T 2-deoxy-L-fucose transferase from Streptomyces galilaeus.